The chain runs to 335 residues: Endo-beta-N-acetylglucosaminidase F2 (335 aa).

A signal peptide spans 1 to 45; that stretch reads MKTANFSFALCLSVVIMLFIKCTRSEQDLSVTKDAIAQKSGVTVS. The GH18 domain maps to 61–321; that stretch reads QISAGYYRTW…SSNDNTLRAP (261 aa). O-linked (Man...) serine glycosylation is found at Ser73, Ser89, and Ser143. Glu171 serves as the catalytic Proton donor.

The protein belongs to the glycosyl hydrolase 18 family. As to quaternary structure, monomer. Post-translationally, carbohydrates at Ser-73, Ser-89 and Ser-143 consist of (2-OMe)Man1-4GlcNAcU1-4GlcU1-4Glc1-4(2-OMe)GlcU1-4[(2-OMe)Rham1-2]Man.

Its subcellular location is the secreted. It catalyses the reaction an N(4)-(oligosaccharide-(1-&gt;3)-[oligosaccharide-(1-&gt;6)]-beta-D-Man-(1-&gt;4)-beta-D-GlcNAc-(1-&gt;4)-alpha-D-GlcNAc)-L-asparaginyl-[protein] + H2O = an oligosaccharide-(1-&gt;3)-[oligosaccharide-(1-&gt;6)]-beta-D-Man-(1-&gt;4)-D-GlcNAc + N(4)-(N-acetyl-beta-D-glucosaminyl)-L-asparaginyl-[protein]. Functionally, endohydrolysis of the di-N-acetylchitobiosyl unit in high-mannose glycopeptides and glycoproteins. Complex biantennary glycans are the preferred substrates. Tri- and tetraantennary glycans are not hydrolyzed, and high mannose glycans are very poor substrates. The polypeptide is Endo-beta-N-acetylglucosaminidase F2 (endOF2) (Elizabethkingia meningoseptica (Chryseobacterium meningosepticum)).